The chain runs to 71 residues: Small ribosomal subunit protein eS17 (71 aa).

It belongs to the eukaryotic ribosomal protein eS17 family.

This chain is Small ribosomal subunit protein eS17, found in Pyrobaculum arsenaticum (strain DSM 13514 / JCM 11321 / PZ6).